The following is a 414-amino-acid chain: Putative transporter AmpG 4 (414 aa).

The next 12 helical transmembrane spans lie at 15 to 35 (IFILGIVSGMPLVIIFSTLSV), 44 to 63 (IAVITTFAVARLSYSLKVFW), 84 to 104 (WLILCSSLMVLVLIAMSKENP), 109 to 129 (TSLYFLTIALGFLSSTFDIAV), 150 to 170 (VFGYRIGMLITGAGALYLAEI), 177 to 197 (LTFVIIAIIFAVATIFIITVN), 230 to 250 (FAVTILLAVIFFKLGDAMLGA), 268 to 288 (IIAKLYGLIATLVGGFAGGIV), 295 to 315 (FKGLIITGIAQSLTHFAFIWL), 324 to 344 (ALLIAITIENFAAAMGATALV), 360 to 379 (YALLSSSSSLCNNTVTIYAG), and 389 to 409 (GFFIFTIILALPALFILMYLN).

Belongs to the major facilitator superfamily.

The protein resides in the cell inner membrane. The protein is Putative transporter AmpG 4 (ampG4) of Rickettsia felis (strain ATCC VR-1525 / URRWXCal2) (Rickettsia azadi).